We begin with the raw amino-acid sequence, 110 residues long: DNA-binding protein PAE3044 (110 aa).

Belongs to the PDCD5 family.

This is DNA-binding protein PAE3044 from Pyrobaculum aerophilum (strain ATCC 51768 / DSM 7523 / JCM 9630 / CIP 104966 / NBRC 100827 / IM2).